The chain runs to 329 residues: Phosphate import ATP-binding protein PstB (329 aa).

Residues 83-325 (FEIENLNFWY…PKQKETNRYI (243 aa)) form the ABC transporter domain. 116-123 (GKSGCGKS) lines the ATP pocket.

This sequence belongs to the ABC transporter superfamily. Phosphate importer (TC 3.A.1.7) family. The complex is composed of two ATP-binding proteins (PstB), two transmembrane proteins (PstC and PstA) and a solute-binding protein (PstS).

It is found in the cell membrane. The enzyme catalyses phosphate(out) + ATP + H2O = ADP + 2 phosphate(in) + H(+). Functionally, part of the ABC transporter complex PstSACB involved in phosphate import. Responsible for energy coupling to the transport system. This is Phosphate import ATP-binding protein PstB from Mycoplasma pneumoniae (strain ATCC 29342 / M129 / Subtype 1) (Mycoplasmoides pneumoniae).